We begin with the raw amino-acid sequence, 442 residues long: tRNA modification GTPase MnmE (442 aa).

Residues arginine 27, glutamate 84, and lysine 124 each coordinate (6S)-5-formyl-5,6,7,8-tetrahydrofolate. The region spanning 221 to 366 is the TrmE-type G domain; the sequence is GLHVVIVGAP…LLDALQAFAE (146 aa). GTP contacts are provided by residues 231–236, 250–256, and 275–278; these read NAGKSS, SKEAGTT, and DTAG. Serine 235 and threonine 256 together coordinate Mg(2+). Lysine 442 is a binding site for (6S)-5-formyl-5,6,7,8-tetrahydrofolate.

The protein belongs to the TRAFAC class TrmE-Era-EngA-EngB-Septin-like GTPase superfamily. TrmE GTPase family. As to quaternary structure, homodimer. Heterotetramer of two MnmE and two MnmG subunits. It depends on K(+) as a cofactor.

It is found in the cytoplasm. Exhibits a very high intrinsic GTPase hydrolysis rate. Involved in the addition of a carboxymethylaminomethyl (cmnm) group at the wobble position (U34) of certain tRNAs, forming tRNA-cmnm(5)s(2)U34. This Brucella suis biovar 1 (strain 1330) protein is tRNA modification GTPase MnmE.